Here is a 345-residue protein sequence, read N- to C-terminus: Dimethyladenosine transferase 1, mitochondrial (345 aa).

Residues 1 to 27 (MAAPGKLSTCRLPPLPTIREIIKLFRL) constitute a mitochondrion transit peptide. S-adenosyl-L-methionine contacts are provided by L38, G63, E85, K86, D111, V112, and N141.

Belongs to the class I-like SAM-binding methyltransferase superfamily. rRNA adenine N(6)-methyltransferase family. KsgA subfamily. As to quaternary structure, interacts with mitochondrial RNA polymerase POLRMT. Interacts with TFAM. Bound to the maturing mtSSU until the late stages of assembly.

It is found in the mitochondrion. It catalyses the reaction adenosine(N)/adenosine(N+1) in rRNA + 4 S-adenosyl-L-methionine = N(6)-dimethyladenosine(N)/N(6)-dimethyladenosine(N+1) in rRNA + 4 S-adenosyl-L-homocysteine + 4 H(+). Functionally, mitochondrial methyltransferase which uses S-adenosyl methionine to dimethylate two highly conserved adjacent adenosine residues (A1583 and A1584) within the loop of helix 45 at the 3-prime end of 12S rRNA, thereby regulating the assembly or stability of the small subunit of the mitochondrial ribosome. Also required for basal transcription of mitochondrial DNA, probably via its interaction with POLRMT and TFAM. Stimulates transcription independently of the methyltransferase activity. This Macaca fascicularis (Crab-eating macaque) protein is Dimethyladenosine transferase 1, mitochondrial (TFB1M).